Consider the following 510-residue polypeptide: ATP synthase subunit alpha (510 aa).

Gly-169–Thr-176 contributes to the ATP binding site.

The protein belongs to the ATPase alpha/beta chains family. In terms of assembly, F-type ATPases have 2 components, CF(1) - the catalytic core - and CF(0) - the membrane proton channel. CF(1) has five subunits: alpha(3), beta(3), gamma(1), delta(1), epsilon(1). CF(0) has four main subunits: a(1), b(1), b'(1) and c(9-12).

It localises to the cell inner membrane. It catalyses the reaction ATP + H2O + 4 H(+)(in) = ADP + phosphate + 5 H(+)(out). Its function is as follows. Produces ATP from ADP in the presence of a proton gradient across the membrane. The alpha chain is a regulatory subunit. The protein is ATP synthase subunit alpha of Rhodopseudomonas palustris (strain BisA53).